The chain runs to 115 residues: MTRVRRGYIARRRRRKIRLFASSFRGAHSRLTRTATQQKIRALVSSHRGRGRQKRDFRRLWITRINAVTRENGVPYSRLIHDLRKKQLLLNRKILAQIAISNRNCLYMISNDIIK.

It belongs to the bacterial ribosomal protein bL20 family.

The protein resides in the plastid. The protein localises to the chloroplast. Binds directly to 23S ribosomal RNA and is necessary for the in vitro assembly process of the 50S ribosomal subunit. It is not involved in the protein synthesizing functions of that subunit. This is Large ribosomal subunit protein bL20c from Nymphaea alba (White water-lily).